The primary structure comprises 78 residues: D-alanyl carrier protein (78 aa).

In terms of domain architecture, Carrier spans 1 to 78; that stretch reads MEFREQVLDL…KIVEVLEELR (78 aa). Ser-36 is modified (O-(pantetheine 4'-phosphoryl)serine).

Belongs to the DltC family. 4'-phosphopantetheine is transferred from CoA to a specific serine of apo-DCP.

It is found in the cytoplasm. It participates in cell wall biogenesis; lipoteichoic acid biosynthesis. Functionally, carrier protein involved in the D-alanylation of lipoteichoic acid (LTA). The loading of thioester-linked D-alanine onto DltC is catalyzed by D-alanine--D-alanyl carrier protein ligase DltA. The DltC-carried D-alanyl group is further transferred to cell membrane phosphatidylglycerol (PG) by forming an ester bond, probably catalyzed by DltD. D-alanylation of LTA plays an important role in modulating the properties of the cell wall in Gram-positive bacteria, influencing the net charge of the cell wall. The chain is D-alanyl carrier protein from Staphylococcus xylosus.